Reading from the N-terminus, the 400-residue chain is Phosphoglycerate kinase (400 aa).

Substrate contacts are provided by residues 23–25, Arg38, 61–64, Arg120, and Arg153; these read DLN and HFGR. ATP contacts are provided by residues Lys203, Glu325, and 355 to 358; that span reads GGDT.

It belongs to the phosphoglycerate kinase family. In terms of assembly, monomer.

Its subcellular location is the cytoplasm. It carries out the reaction (2R)-3-phosphoglycerate + ATP = (2R)-3-phospho-glyceroyl phosphate + ADP. The protein operates within carbohydrate degradation; glycolysis; pyruvate from D-glyceraldehyde 3-phosphate: step 2/5. In Methylobacterium radiotolerans (strain ATCC 27329 / DSM 1819 / JCM 2831 / NBRC 15690 / NCIMB 10815 / 0-1), this protein is Phosphoglycerate kinase.